A 1705-amino-acid polypeptide reads, in one-letter code: Homeobox-DDT domain protein RLT1 (1705 aa).

Disordered stretches follow at residues 1-53 (MEMG…QLET), 118-167 (ELPA…EYET), 237-267 (HDPR…TPNM), 296-322 (GPVP…MPSP), and 352-414 (GVRK…RKEE). The homeobox DNA-binding region spans 39-98 (VKPKRQMKTPFQLETLEKVYSEEKYPSEATRAELSEKLDLSDRQLQMWFCHRRLKDKKDG). Over residues 136-159 (GSESGCSPYSNSRRNFASGSSSSR) the composition is skewed to low complexity. 2 stretches are compositionally biased toward polar residues: residues 253–265 (EQQS…SFTP) and 310–319 (RNCSTSQQDM). The 60-residue stretch at 549-608 (DETVGNLLMVWRFLISFSDVLDLWPFTLDEFIQAFHDYDSRLLGEIHVTLLRSIIRDVED) folds into the DDT domain. In terms of domain architecture, HTH HARE-type spans 731–800 (GTVKFAAFHV…APSTYCVRAP (70 aa)). Disordered regions lie at residues 1028–1053 (TRER…DLSN), 1198–1229 (VNHS…SIRV), 1441–1502 (PEDE…KAQS), 1561–1635 (PKSE…FVDY), and 1652–1705 (AIEE…SSDS). Low complexity predominate over residues 1201-1220 (SPTDSVSPSSSAISGSNSDS). Residues 1455-1465 (SPFKGKGPREQ) are compositionally biased toward basic and acidic residues. 3 stretches are compositionally biased toward acidic residues: residues 1565-1574 (EVEEDEEEEE), 1611-1628 (VDDE…DEDG), and 1669-1684 (GEDD…DDDV).

In terms of assembly, interacts with CHR11 and CHR17. Interacts (via the DDT domain) with CHR11 (via C-terminus). Highly expressed in growing tissues such as inflorescence and flower meristems, young leaves and floral organs. Expressed in roots, rosette and cauline leaves, stems, flowers, inflorescences and siliques.

Its subcellular location is the nucleus. Functionally, transcriptional regulator required for the maintenance of the plant vegetative phase. In association with CHR11 or CHR17 may prevent the early activation of the vegetative-to-reproductive transition by regulating key genes that contribute to flower timing, such as FT, SEP1, SEP3, AGL8/FUL, SOC1 and FLC. This is Homeobox-DDT domain protein RLT1 from Arabidopsis thaliana (Mouse-ear cress).